We begin with the raw amino-acid sequence, 135 residues long: Retinol-binding protein 1 (135 aa).

Residue W9 is modified to Omega-N-methylarginine. Positions 22-32 (RALDVNVALRK) are important for interaction with STRA6. All-trans-retinol contacts are provided by K41, M63, and Q109.

The protein belongs to the calycin superfamily. Fatty-acid binding protein (FABP) family. In terms of assembly, interacts (only as retinol-free apoprotein) with STRA6. Detected in nearly all the tissues with higher expression in adult ovary, pancreas, pituitary gland and adrenal gland, and fetal liver.

It localises to the cytoplasm. It is found in the lipid droplet. Functionally, cytoplasmic retinol-binding protein. Accepts retinol from the transport protein STRA6, and thereby contributes to retinol uptake, storage and retinoid homeostasis. In Homo sapiens (Human), this protein is Retinol-binding protein 1 (RBP1).